The following is a 156-amino-acid chain: ATP synthase subunit b (156 aa).

The helical transmembrane segment at Leu-7 to Ile-29 threads the bilayer.

The protein belongs to the ATPase B chain family. As to quaternary structure, F-type ATPases have 2 components, F(1) - the catalytic core - and F(0) - the membrane proton channel. F(1) has five subunits: alpha(3), beta(3), gamma(1), delta(1), epsilon(1). F(0) has three main subunits: a(1), b(2) and c(10-14). The alpha and beta chains form an alternating ring which encloses part of the gamma chain. F(1) is attached to F(0) by a central stalk formed by the gamma and epsilon chains, while a peripheral stalk is formed by the delta and b chains.

It is found in the cell inner membrane. Its function is as follows. F(1)F(0) ATP synthase produces ATP from ADP in the presence of a proton or sodium gradient. F-type ATPases consist of two structural domains, F(1) containing the extramembraneous catalytic core and F(0) containing the membrane proton channel, linked together by a central stalk and a peripheral stalk. During catalysis, ATP synthesis in the catalytic domain of F(1) is coupled via a rotary mechanism of the central stalk subunits to proton translocation. In terms of biological role, component of the F(0) channel, it forms part of the peripheral stalk, linking F(1) to F(0). In Vibrio vulnificus (strain CMCP6), this protein is ATP synthase subunit b.